The sequence spans 182 residues: Coiled-coil domain-containing protein 32 (182 aa).

The segment covering 1–10 has biased composition (basic and acidic residues); sequence MMIDDFETHA. Disordered regions lie at residues 1–61 and 153–182; these read MMID…FSPW and PTQNSETPASSSQTDKPCVEEEEECPSPEK. The span at 153–167 shows a compositional bias: polar residues; it reads PTQNSETPASSSQTD. The span at 172–182 shows a compositional bias: acidic residues; it reads EEEEECPSPEK.

As to quaternary structure, associates with adaptor protein complex 2 (AP-2).

The protein resides in the membrane. It is found in the coated pit. Functionally, regulates clathrin-mediated endocytsois of cargos such as transferrin probably through the association and modulation of adaptor protein complex 2 (AP-2). Has a role in ciliogenesis and is required for proper cephalic and left/right axis development. In Danio rerio (Zebrafish), this protein is Coiled-coil domain-containing protein 32.